Consider the following 448-residue polypeptide: Protein giant (448 aa).

Disordered regions lie at residues 23-47 (MHHH…LPVQ), 83-134 (QQHQ…ASPT), 238-259 (VEAT…RPFK), and 298-363 (IRSS…TSSS). Residues 30 to 47 (HHQQQPLHHLPHSQLPVQ) show a composition bias toward low complexity. The segment covering 100-112 (DLSRRCDSVETPR) has biased composition (basic and acidic residues). Positions 115–134 (PSPYQTSYSYGSGSPSASPT) are enriched in low complexity. Residues 298-310 (IRSSNGGSRTVTN) show a composition bias toward polar residues. Residues 318 to 333 (SRSGSVNEGSSSNNNS) are compositionally biased toward low complexity. In terms of domain architecture, bZIP spans 384-447 (DAAYYERRRK…AAFTSAKVTT (64 aa)). Positions 390-406 (RRRKNNAAAKKSRDRRR) are basic motif. Positions 407-414 (IKEDEIAI) are leucine-zipper.

Belongs to the bZIP family. As to quaternary structure, homodimer or heterodimer. In terms of processing, phosphorylated at multiple sites.

The protein resides in the nucleus. In terms of biological role, represses the expression of both the krueppel and knirps segmentation gap genes. Binds, in vitro, to the krueppel regulatory elements CD1 and CD2. It is required in the early embryo for the development of portions of the head and abdomen. This Drosophila melanogaster (Fruit fly) protein is Protein giant (gt).